The sequence spans 87 residues: Small ribosomal subunit protein uS15c (87 aa).

It belongs to the universal ribosomal protein uS15 family. As to quaternary structure, part of the 30S ribosomal subunit.

It is found in the plastid. The protein localises to the chloroplast. The polypeptide is Small ribosomal subunit protein uS15c (rps15) (Illicium oligandrum (Star anise)).